The primary structure comprises 126 residues: Large ribosomal subunit protein bL19 (126 aa).

Belongs to the bacterial ribosomal protein bL19 family.

This protein is located at the 30S-50S ribosomal subunit interface and may play a role in the structure and function of the aminoacyl-tRNA binding site. This chain is Large ribosomal subunit protein bL19, found in Paracoccus denitrificans (strain Pd 1222).